We begin with the raw amino-acid sequence, 229 residues long: MAPFQKAISIDTAIADVRDGSVLMFGGFGGVGSPPSLIEAILDSGVTDLTVICNDAGFPDIGIGPLIVNQRVKTLIASHIGSNPVAGKQMTEGTLEVQFSPQGTLAERIRAGGAGLGGILTDVGIDNQMVCEKKDIVTVAGKRYLIEEALTADFAFINAYIADEFGNLTYDKTARNMNPLMAMAARRTFAEAERIVPMGEISEEMIVTPGVFVEGVVRSEGVKWKWAWE.

CoA is bound at residue 26-32; it reads GGFGGVG.

It belongs to the 3-oxoacid CoA-transferase subunit A family. As to quaternary structure, heterodimer of a subunit alpha and a subunit beta.

The sequence is that of Probable coenzyme A transferase subunit alpha (yodS) from Bacillus subtilis (strain 168).